We begin with the raw amino-acid sequence, 69 residues long: Conotoxin Eb6.22 (69 aa).

The signal sequence occupies residues 1–17 (VLIIAVLFLTACQLTTA). The propeptide occupies 18–41 (ETYSRGRQKHRARRSTDKNSKWTR). 3 cysteine pairs are disulfide-bonded: Cys-43–Cys-57, Cys-50–Cys-61, and Cys-56–Cys-68.

Belongs to the conotoxin O1 superfamily. Expressed by the venom duct.

It localises to the secreted. In Conus ebraeus (Hebrew cone), this protein is Conotoxin Eb6.22 (E1).